The chain runs to 356 residues: Dynein axonemal heavy chain 12 (356 aa).

ANK repeat units follow at residues 17–46 (DSSS…DANV), 50–81 (SGHL…AIKR), 82–111 (SGIS…DVNF), 124–153 (HRKS…MPNQ), 154–183 (DPVN…NVNY), and 185–218 (CRVN…DTEL). The SOCS box domain maps to 290-345 (WSEIHFILTNPRSLKHLCRLKIRKCMGRLRLRCPVFMSFLPLPSRLKAYVLYKEYD).

Belongs to the dynein heavy chain family. In terms of assembly, consists of at least two heavy chains and a number of intermediate and light chains.

The protein resides in the cytoplasm. The protein localises to the cytoskeleton. Its subcellular location is the cilium axoneme. It participates in protein modification; protein ubiquitination. In terms of biological role, force generating protein of respiratory cilia. Produces force towards the minus ends of microtubules. Dynein has ATPase activity; the force-producing power stroke is thought to occur on release of ADP. Involved in sperm motility; implicated in sperm flagellar assembly. Its function is as follows. May be a substrate-recognition component of a SCF-like ECS (Elongin-Cullin-SOCS-box protein) E3 ubiquitin-protein ligase complex which mediates the ubiquitination and subsequent proteasomal degradation of target proteins. The protein is Dynein axonemal heavy chain 12 (DNAH12) of Bos taurus (Bovine).